Reading from the N-terminus, the 426-residue chain is UDP-N-acetylglucosamine 1-carboxyvinyltransferase (426 aa).

Position 24 to 25 (24 to 25) interacts with phosphoenolpyruvate; the sequence is KN. Position 95 (Arg95) interacts with UDP-N-acetyl-alpha-D-glucosamine. Cys119 acts as the Proton donor in catalysis. 2-(S-cysteinyl)pyruvic acid O-phosphothioketal is present on Cys119. UDP-N-acetyl-alpha-D-glucosamine-binding positions include 124 to 128, Asp308, and Val330; that span reads RPVDQ.

It belongs to the EPSP synthase family. MurA subfamily.

The protein localises to the cytoplasm. It carries out the reaction phosphoenolpyruvate + UDP-N-acetyl-alpha-D-glucosamine = UDP-N-acetyl-3-O-(1-carboxyvinyl)-alpha-D-glucosamine + phosphate. It functions in the pathway cell wall biogenesis; peptidoglycan biosynthesis. Cell wall formation. Adds enolpyruvyl to UDP-N-acetylglucosamine. The protein is UDP-N-acetylglucosamine 1-carboxyvinyltransferase of Deinococcus radiodurans (strain ATCC 13939 / DSM 20539 / JCM 16871 / CCUG 27074 / LMG 4051 / NBRC 15346 / NCIMB 9279 / VKM B-1422 / R1).